We begin with the raw amino-acid sequence, 127 residues long: Small ribosomal subunit protein uS12 (127 aa).

Over residues 11 to 20 (GRKPKKKKSK) the composition is skewed to basic residues. The tract at residues 11–30 (GRKPKKKKSKAPALQGNPQK) is disordered. The residue at position 89 (D89) is a 3-methylthioaspartic acid. The disordered stretch occupies residues 105-127 (AGVEGRRQSRSKYGAKRPKDQKK). Residues 112-127 (QSRSKYGAKRPKDQKK) show a composition bias toward basic residues.

It belongs to the universal ribosomal protein uS12 family. As to quaternary structure, part of the 30S ribosomal subunit. Contacts proteins S8 and S17. May interact with IF1 in the 30S initiation complex.

Its function is as follows. With S4 and S5 plays an important role in translational accuracy. Functionally, interacts with and stabilizes bases of the 16S rRNA that are involved in tRNA selection in the A site and with the mRNA backbone. Located at the interface of the 30S and 50S subunits, it traverses the body of the 30S subunit contacting proteins on the other side and probably holding the rRNA structure together. The combined cluster of proteins S8, S12 and S17 appears to hold together the shoulder and platform of the 30S subunit. This Thermotoga maritima (strain ATCC 43589 / DSM 3109 / JCM 10099 / NBRC 100826 / MSB8) protein is Small ribosomal subunit protein uS12.